Consider the following 639-residue polypeptide: UvrABC system protein C (639 aa).

Positions 31–109 (EQAGVYRMYD…IKKYQPKYNI (79 aa)) constitute a GIY-YIG domain. Residues 218–253 (SAVIEQLVARMELASNELHFELAAKYRDQIVTLRKV) enclose the UVR domain.

Belongs to the UvrC family. In terms of assembly, interacts with UvrB in an incision complex.

The protein resides in the cytoplasm. The UvrABC repair system catalyzes the recognition and processing of DNA lesions. UvrC both incises the 5' and 3' sides of the lesion. The N-terminal half is responsible for the 3' incision and the C-terminal half is responsible for the 5' incision. The polypeptide is UvrABC system protein C (Colwellia psychrerythraea (strain 34H / ATCC BAA-681) (Vibrio psychroerythus)).